The primary structure comprises 172 residues: Small ribosomal subunit protein uS5 (172 aa).

Positions 15–78 (YIEKLVNIRR…DKARKRMKSV (64 aa)) constitute an S5 DRBM domain.

It belongs to the universal ribosomal protein uS5 family. Part of the 30S ribosomal subunit. Contacts proteins S4 and S8.

Functionally, with S4 and S12 plays an important role in translational accuracy. In terms of biological role, located at the back of the 30S subunit body where it stabilizes the conformation of the head with respect to the body. This Ruthia magnifica subsp. Calyptogena magnifica protein is Small ribosomal subunit protein uS5.